The sequence spans 142 residues: Large ribosomal subunit protein uL11 (142 aa).

It belongs to the universal ribosomal protein uL11 family. Part of the ribosomal stalk of the 50S ribosomal subunit. Interacts with L10 and the large rRNA to form the base of the stalk. L10 forms an elongated spine to which L12 dimers bind in a sequential fashion forming a multimeric L10(L12)X complex. Post-translationally, one or more lysine residues are methylated.

Functionally, forms part of the ribosomal stalk which helps the ribosome interact with GTP-bound translation factors. The sequence is that of Large ribosomal subunit protein uL11 from Colwellia psychrerythraea (strain 34H / ATCC BAA-681) (Vibrio psychroerythus).